The sequence spans 160 residues: Cytochrome b6-f complex subunit 4 (160 aa).

A run of 3 helical transmembrane segments spans residues 36–56, 95–115, and 131–151; these read LLYVFPIVIMGSFACIVALAV, LLGVLAMASVPLGLILVPFIE, and TVFLFGTLVTLWLGIGAALPL.

This sequence belongs to the cytochrome b family. PetD subfamily. As to quaternary structure, the 4 large subunits of the cytochrome b6-f complex are cytochrome b6, subunit IV (17 kDa polypeptide, PetD), cytochrome f and the Rieske protein, while the 4 small subunits are PetG, PetL, PetM and PetN. The complex functions as a dimer.

Its subcellular location is the cellular thylakoid membrane. Functionally, component of the cytochrome b6-f complex, which mediates electron transfer between photosystem II (PSII) and photosystem I (PSI), cyclic electron flow around PSI, and state transitions. In Trichormus variabilis (strain ATCC 29413 / PCC 7937) (Anabaena variabilis), this protein is Cytochrome b6-f complex subunit 4.